Reading from the N-terminus, the 319-residue chain is Putative peptide biosynthesis protein YydG (319 aa).

One can recognise a Radical SAM core domain in the interval 1 to 214 (MYNKTVSINL…HCPGYDIVYH (214 aa)). Residues C14, C18, and C21 each coordinate [4Fe-4S] cluster.

[4Fe-4S] cluster is required as a cofactor.

Required for production of the modified peptide YydF. May activate a metalloenzyme (Potential). This Bacillus subtilis (strain 168) protein is Putative peptide biosynthesis protein YydG (yydG).